We begin with the raw amino-acid sequence, 159 residues long: 3-hydroxyacyl-[acyl-carrier-protein] dehydratase FabZ (159 aa).

Residue His62 is part of the active site.

It belongs to the thioester dehydratase family. FabZ subfamily.

It localises to the cytoplasm. The catalysed reaction is a (3R)-hydroxyacyl-[ACP] = a (2E)-enoyl-[ACP] + H2O. In terms of biological role, involved in unsaturated fatty acids biosynthesis. Catalyzes the dehydration of short chain beta-hydroxyacyl-ACPs and long chain saturated and unsaturated beta-hydroxyacyl-ACPs. The protein is 3-hydroxyacyl-[acyl-carrier-protein] dehydratase FabZ of Methylobacterium nodulans (strain LMG 21967 / CNCM I-2342 / ORS 2060).